Reading from the N-terminus, the 210-residue chain is LexA repressor (210 aa).

The H-T-H motif DNA-binding region spans 28–48 (FEEIAEGMGLSSLATVHKHIG). Active-site for autocatalytic cleavage activity residues include serine 131 and lysine 169.

It belongs to the peptidase S24 family. Homodimer.

It carries out the reaction Hydrolysis of Ala-|-Gly bond in repressor LexA.. Functionally, represses a number of genes involved in the response to DNA damage (SOS response), including recA and lexA. In the presence of single-stranded DNA, RecA interacts with LexA causing an autocatalytic cleavage which disrupts the DNA-binding part of LexA, leading to derepression of the SOS regulon and eventually DNA repair. This is LexA repressor from Koribacter versatilis (strain Ellin345).